Consider the following 488-residue polypeptide: Glutamyl-tRNA(Gln) amidotransferase subunit B, mitochondrial (488 aa).

Belongs to the GatB/GatE family. GatB subfamily. In terms of assembly, subunit of the heterotrimeric GatFAB amidotransferase (AdT) complex, composed of A, B and F subunits.

The protein resides in the mitochondrion. The catalysed reaction is L-glutamyl-tRNA(Gln) + L-glutamine + ATP + H2O = L-glutaminyl-tRNA(Gln) + L-glutamate + ADP + phosphate + H(+). Its function is as follows. Allows the formation of correctly charged Gln-tRNA(Gln) through the transamidation of misacylated Glu-tRNA(Gln) in the mitochondria. The reaction takes place in the presence of glutamine and ATP through an activated gamma-phospho-Glu-tRNA(Gln). The chain is Glutamyl-tRNA(Gln) amidotransferase subunit B, mitochondrial from Candida albicans (strain WO-1) (Yeast).